Reading from the N-terminus, the 902-residue chain is Mitochondrial aspartate-glutamate transporter AGC1 (902 aa).

3 Solcar repeats span residues 528-614, 622-710, and 725-813; these read FDSL…MRNR, LSLF…LKKD, and LKTW…FKGF. The next 6 helical transmembrane spans lie at 534 to 554, 591 to 611, 622 to 642, 681 to 702, 731 to 751, and 786 to 806; these read FSLG…IDFI, GPQL…NDFM, LSLF…VIFT, GLYN…IYFP, LTAG…FDVI, and FKGG…TLAA.

It belongs to the mitochondrial carrier (TC 2.A.29) family.

The protein resides in the mitochondrion inner membrane. Its function is as follows. Calcium-dependent mitochondrial aspartate and glutamate carrier. Transport of glutamate in mitochondria is required for mitochondrial transamination reactions and ornithine synthesis. Plays also a role in malate-aspartate NADH shuttle, which is critical for growth on acetate and fatty acids. This is Mitochondrial aspartate-glutamate transporter AGC1 (AGC1) from Saccharomyces cerevisiae (strain ATCC 204508 / S288c) (Baker's yeast).